A 594-amino-acid chain; its full sequence is UvrABC system protein C (594 aa).

Positions 14 to 91 constitute a GIY-YIG domain; it reads DQPGCYLMKD…IKKHDPKYNI (78 aa). In terms of domain architecture, UVR spans 196–231; the sequence is KEVRSELETKMYEASEKLEFERAKELRDQIAHIDAI.

Belongs to the UvrC family. In terms of assembly, interacts with UvrB in an incision complex.

The protein localises to the cytoplasm. Its function is as follows. The UvrABC repair system catalyzes the recognition and processing of DNA lesions. UvrC both incises the 5' and 3' sides of the lesion. The N-terminal half is responsible for the 3' incision and the C-terminal half is responsible for the 5' incision. The protein is UvrABC system protein C of Bacillus thuringiensis (strain Al Hakam).